The chain runs to 492 residues: Ketol-acid reductoisomerase (NADP(+)) (492 aa).

The region spanning 15–208 is the KARI N-terminal Rossmann domain; sequence AQLGKCRFMA…GAHRAGVLES (194 aa). NADP(+)-binding positions include 45–48, Arg-68, Arg-76, Ser-78, and 108–110; these read CGAQ and DKQ. His-132 is a catalytic residue. Gly-158 provides a ligand contact to NADP(+). 2 consecutive KARI C-terminal knotted domains span residues 209 to 344 and 345 to 485; these read SFVA…NSPE and YDGK…MTDM. Mg(2+) contacts are provided by Asp-217, Glu-221, Glu-389, and Glu-393. Residue Ser-414 participates in substrate binding.

Belongs to the ketol-acid reductoisomerase family. Mg(2+) is required as a cofactor.

The catalysed reaction is (2R)-2,3-dihydroxy-3-methylbutanoate + NADP(+) = (2S)-2-acetolactate + NADPH + H(+). It carries out the reaction (2R,3R)-2,3-dihydroxy-3-methylpentanoate + NADP(+) = (S)-2-ethyl-2-hydroxy-3-oxobutanoate + NADPH + H(+). It functions in the pathway amino-acid biosynthesis; L-isoleucine biosynthesis; L-isoleucine from 2-oxobutanoate: step 2/4. The protein operates within amino-acid biosynthesis; L-valine biosynthesis; L-valine from pyruvate: step 2/4. Functionally, involved in the biosynthesis of branched-chain amino acids (BCAA). Catalyzes an alkyl-migration followed by a ketol-acid reduction of (S)-2-acetolactate (S2AL) to yield (R)-2,3-dihydroxy-isovalerate. In the isomerase reaction, S2AL is rearranged via a Mg-dependent methyl migration to produce 3-hydroxy-3-methyl-2-ketobutyrate (HMKB). In the reductase reaction, this 2-ketoacid undergoes a metal-dependent reduction by NADPH to yield (R)-2,3-dihydroxy-isovalerate. The sequence is that of Ketol-acid reductoisomerase (NADP(+)) from Photorhabdus laumondii subsp. laumondii (strain DSM 15139 / CIP 105565 / TT01) (Photorhabdus luminescens subsp. laumondii).